Consider the following 620-residue polypeptide: 1-deoxy-D-xylulose-5-phosphate synthase (620 aa).

Residues histidine 80 and 121 to 123 contribute to the thiamine diphosphate site; that span reads GHS. Aspartate 152 contributes to the Mg(2+) binding site. Thiamine diphosphate is bound by residues 153–154, asparagine 181, tyrosine 288, and glutamate 370; that span reads GA. Residue asparagine 181 participates in Mg(2+) binding.

Belongs to the transketolase family. DXPS subfamily. Homodimer. The cofactor is Mg(2+). Requires thiamine diphosphate as cofactor.

The enzyme catalyses D-glyceraldehyde 3-phosphate + pyruvate + H(+) = 1-deoxy-D-xylulose 5-phosphate + CO2. It participates in metabolic intermediate biosynthesis; 1-deoxy-D-xylulose 5-phosphate biosynthesis; 1-deoxy-D-xylulose 5-phosphate from D-glyceraldehyde 3-phosphate and pyruvate: step 1/1. Its function is as follows. Catalyzes the acyloin condensation reaction between C atoms 2 and 3 of pyruvate and glyceraldehyde 3-phosphate to yield 1-deoxy-D-xylulose-5-phosphate (DXP). The chain is 1-deoxy-D-xylulose-5-phosphate synthase from Salmonella agona (strain SL483).